The primary structure comprises 251 residues: 5'-nucleotidase SurE (251 aa).

Residues aspartate 8, aspartate 9, serine 40, and asparagine 95 each coordinate a divalent metal cation.

Belongs to the SurE nucleotidase family. It depends on a divalent metal cation as a cofactor.

The protein resides in the cytoplasm. It catalyses the reaction a ribonucleoside 5'-phosphate + H2O = a ribonucleoside + phosphate. In terms of biological role, nucleotidase that shows phosphatase activity on nucleoside 5'-monophosphates. The chain is 5'-nucleotidase SurE from Maridesulfovibrio salexigens (strain ATCC 14822 / DSM 2638 / NCIMB 8403 / VKM B-1763) (Desulfovibrio salexigens).